The sequence spans 424 residues: Dehydrogenase FUM7 (424 aa).

Belongs to the iron-containing alcohol dehydrogenase family. Requires Fe cation as cofactor.

The protein operates within mycotoxin biosynthesis. Functionally, dehydrogenase; part of the gene cluster that mediates the biosynthesis of fumonisins B1 (FB1), B2 (FB2), B3 (FB3), and B4 (FB4), which are carcinogenic mycotoxins. Within the pathway, FUM7 is involved the addition of the tricarballylic moieties to the carbon backbone. FUM7 dehydrogenase removes the C-3 hydroxyl of citrate to form tricarballylic acid either before or after the CoA activation by the FUM10 acyl-CoA synthetase and FUM14 catalyzed esterification of CoA-activated tricarballylic acid to the C-14 and C-15 hydroxyls of the fumonisin backbone. The biosynthesis starts with the FUM1-catalyzed carbon chain assembly from one molecule of acetyl-CoA, eight molecules of malonyl-CoA, and two molecules of methionine (in S-adenosyl form). The C18 polyketide chain is released from the enzyme by a nucleophilic attack of a carbanion, which is derived from R-carbon of alanine by decarboxylation, on the carbonyl carbon of polyketide acyl chain. This step is catalyzed by the pyridoxal 5'-phosphate-dependent aminoacyl transferase FUM8. The resultant 3-keto intermediate is then stereospecifically reduced to a 3-hydroxyl product by reductase FUM13. Subsequent oxidations at C-10 by the cytochrome P450 monooxygenase FUM2, C-14 and C-15 by FUM6, FUM12 or FUM15, tricarballylic esterification of the hydroxyl groups on C-14 and C-15 by acyltransferase FUM14, and C-5 hydroxylation by 2-keto-glutarate-dependent dioxygenase FUM3 furnish the biosynthesis of fumonisins. The tricarballylic moieties are most likely derived from the citric acid cycle, and their addition to the carbon backbone may involve FUM7, FUM10, FUM11 and FUM14. The sequence is that of Dehydrogenase FUM7 from Gibberella moniliformis (strain M3125 / FGSC 7600) (Maize ear and stalk rot fungus).